We begin with the raw amino-acid sequence, 479 residues long: Ribosomal RNA small subunit methyltransferase F (479 aa).

S-adenosyl-L-methionine-binding positions include 125-131 (AAAPGSK), Glu-149, Asp-176, and Asp-194. The active-site Nucleophile is the Cys-247.

It belongs to the class I-like SAM-binding methyltransferase superfamily. RsmB/NOP family.

The protein resides in the cytoplasm. The catalysed reaction is cytidine(1407) in 16S rRNA + S-adenosyl-L-methionine = 5-methylcytidine(1407) in 16S rRNA + S-adenosyl-L-homocysteine + H(+). Specifically methylates the cytosine at position 1407 (m5C1407) of 16S rRNA. The polypeptide is Ribosomal RNA small subunit methyltransferase F (Citrobacter koseri (strain ATCC BAA-895 / CDC 4225-83 / SGSC4696)).